The sequence spans 827 residues: NT-3 growth factor receptor (827 aa).

An N-terminal signal peptide occupies residues M1–A31. 2 disulfides stabilise this stretch: C32-C38 and C36-C45. At C32 to D430 the chain is on the extracellular side. Residues N68, N72, and N79 are each glycosylated (N-linked (GlcNAc...) asparagine). 2 LRR repeats span residues G104–K125 and H128–T149. The 50-residue stretch at N160–L209 folds into the LRRCT domain. N-linked (GlcNAc...) asparagine glycosylation is present at N163. Intrachain disulfides connect C164–C189 and C166–C207. Residues N203, N218, N232, N259, N267, N272, and N294 are each glycosylated (N-linked (GlcNAc...) asparagine). Ig-like C2-type domains follow at residues P210 to T300 and H319 to N382. A disulfide bridge links C231 with C284. A disulfide bridge links C320 with C362. N-linked (GlcNAc...) asparagine glycosylation is found at N375 and N388. A helical membrane pass occupies residues T431–I455. The Cytoplasmic segment spans residues N456–G827. The residue at position 518 (Y518) is a Phosphotyrosine; by autocatalysis. Positions I540–L812 constitute a Protein kinase domain. Residues L546–V554 and K574 each bind ATP. The Proton acceptor role is filled by D681. Phosphotyrosine; by autocatalysis is present on residues Y707, Y711, Y712, and Y822.

It belongs to the protein kinase superfamily. Tyr protein kinase family. Insulin receptor subfamily. In terms of assembly, exists in a dynamic equilibrium between monomeric (low affinity) and dimeric (high affinity) structures. Interacts with PTPRS. Post-translationally, ligand-mediated auto-phosphorylation.

Its subcellular location is the membrane. It carries out the reaction L-tyrosyl-[protein] + ATP = O-phospho-L-tyrosyl-[protein] + ADP + H(+). Receptor tyrosine kinase involved in nervous system and probably heart development. Upon binding of its ligand NTF3/neurotrophin-3, NTRK3 autophosphorylates and activates different signaling pathways, including the phosphatidylinositol 3-kinase/AKT and the MAPK pathways, that control cell survival and differentiation. The KT and KD isoforms fail to stimulate transformation, process outgrowth or survival. Isoform KI25 exhibits tyrosine phosphorylation in the absence of ligand and is unable to mediate survival of neuronal cells. The protein is NT-3 growth factor receptor (NTRK3) of Gallus gallus (Chicken).